Here is a 295-residue protein sequence, read N- to C-terminus: MAITFKQVDFTYQPGTPFETKALTDINVTIPTGSYTALIGHTGSGKSTLLQHLNALLKPTSGTVTIGERVITPTTSNKDLKRLRQHVGIVFQFPESQLFEETVAKDIAFGPQNFGASEADALKTAAEMLALVGLDESLLTRSPFDLSGGQMRRVAIAGVLAMQPQVLVLDEPTAGLDPQGRLDMMEMFARLRHERDLTVVLVTHQMDDVANYADNVIVMDRGQIVKTGTPREIFKDPAWLTAHQLGLPKTTAFAHTLQKQGWQFNEWPLTEDELAAAIVQQLPPNAMGEVAAHDE.

In terms of domain architecture, ABC transporter spans 3 to 246 (ITFKQVDFTY…PAWLTAHQLG (244 aa)). 40-47 (GHTGSGKS) serves as a coordination point for ATP.

Belongs to the ABC transporter superfamily. Energy-coupling factor EcfA family. As to quaternary structure, forms a stable energy-coupling factor (ECF) transporter complex composed of 2 membrane-embedded substrate-binding proteins (S component), 2 ATP-binding proteins (A component) and 2 transmembrane proteins (T component).

It localises to the cell membrane. In terms of biological role, ATP-binding (A) component of a common energy-coupling factor (ECF) ABC-transporter complex. Unlike classic ABC transporters this ECF transporter provides the energy necessary to transport a number of different substrates. This chain is Energy-coupling factor transporter ATP-binding protein EcfA2, found in Lactiplantibacillus plantarum (strain ATCC BAA-793 / NCIMB 8826 / WCFS1) (Lactobacillus plantarum).